Consider the following 180-residue polypeptide: Large ribosomal subunit protein uL5 (180 aa).

This sequence belongs to the universal ribosomal protein uL5 family. In terms of assembly, part of the 50S ribosomal subunit; part of the 5S rRNA/L5/L18/L25 subcomplex. Contacts the 5S rRNA and the P site tRNA. Forms a bridge to the 30S subunit in the 70S ribosome.

Functionally, this is one of the proteins that bind and probably mediate the attachment of the 5S RNA into the large ribosomal subunit, where it forms part of the central protuberance. In the 70S ribosome it contacts protein S13 of the 30S subunit (bridge B1b), connecting the 2 subunits; this bridge is implicated in subunit movement. Contacts the P site tRNA; the 5S rRNA and some of its associated proteins might help stabilize positioning of ribosome-bound tRNAs. This is Large ribosomal subunit protein uL5 from Xanthomonas oryzae pv. oryzae (strain MAFF 311018).